The following is a 234-amino-acid chain: Ras-related protein Rab-20 (234 aa).

GTP contacts are provided by G17, K18, T19, D32, and T36. Position 19 (T19) interacts with Mg(2+). Short sequence motifs (switch) lie at residues 28–41 and 55–72; these read RRFP…GGAF and DTAG…YCRG. Mg(2+) is bound by residues T36 and D55. GTP is bound by residues G58, N113, K114, and D116. A disordered region spans residues 125-144; sequence GQEKEECSPNMDAGDRVSPR. The segment covering 126-142 has biased composition (basic and acidic residues); that stretch reads QEKEECSPNMDAGDRVS. The GTP site is built by A184 and K185. The segment at 212 to 234 is disordered; sequence RPSHTVDISSHKPPKRTRSGCCA. Residues 223–234 are compositionally biased toward basic residues; it reads KPPKRTRSGCCA. S-geranylgeranyl cysteine attachment occurs at residues C232 and C233.

The protein belongs to the small GTPase superfamily. Rab family. Mg(2+) serves as cofactor. Low or absent expression in normal pancreas and stronger expression in 15 of 18 exocrine pancreatic adenocarcinomas (at protein level).

The protein resides in the golgi apparatus. It is found in the cytoplasmic vesicle. It localises to the phagosome. Its subcellular location is the phagosome membrane. The catalysed reaction is GTP + H2O = GDP + phosphate + H(+). With respect to regulation, regulated by guanine nucleotide exchange factors (GEFs) which promote the exchange of bound GDP for free GTP. Regulated by GTPase activating proteins (GAPs) which increase the GTP hydrolysis activity. Inhibited by GDP dissociation inhibitors (GDIs). Functionally, the small GTPases Rab are key regulators of intracellular membrane trafficking, from the formation of transport vesicles to their fusion with membranes. Rabs cycle between an inactive GDP-bound form and an active GTP-bound form that is able to recruit to membranes different sets of downstream effectors directly responsible for vesicle formation, movement, tethering and fusion. RAB20 plays a role in apical endocytosis/recycling. Plays a role in the maturation and acidification of phagosomes that engulf pathogens, such as S.aureus and M.tuberculosis. Plays a role in the fusion of phagosomes with lysosomes. The chain is Ras-related protein Rab-20 from Homo sapiens (Human).